A 272-amino-acid polypeptide reads, in one-letter code: Phosphatidylglycerol--prolipoprotein diacylglyceryl transferase (272 aa).

Helical transmembrane passes span 17–37, 55–75, 90–110, 125–145, 174–194, 202–222, and 230–250; these read LQVH…WGLA, LVFY…VLFY, VWTG…AMLF, FVAP…FIGG, PSQI…LWWF, MAVS…MEFF, and GFIL…MLLI. Arg-138 contributes to the a 1,2-diacyl-sn-glycero-3-phospho-(1'-sn-glycerol) binding site.

This sequence belongs to the Lgt family.

The protein resides in the cell inner membrane. The catalysed reaction is L-cysteinyl-[prolipoprotein] + a 1,2-diacyl-sn-glycero-3-phospho-(1'-sn-glycerol) = an S-1,2-diacyl-sn-glyceryl-L-cysteinyl-[prolipoprotein] + sn-glycerol 1-phosphate + H(+). Its pathway is protein modification; lipoprotein biosynthesis (diacylglyceryl transfer). In terms of biological role, catalyzes the transfer of the diacylglyceryl group from phosphatidylglycerol to the sulfhydryl group of the N-terminal cysteine of a prolipoprotein, the first step in the formation of mature lipoproteins. The polypeptide is Phosphatidylglycerol--prolipoprotein diacylglyceryl transferase (Acinetobacter baumannii (strain AB307-0294)).